The sequence spans 107 residues: Sperm-specific class P protein 34 (107 aa).

The segment at 1–26 is disordered; it reads MINVDPPTGNYPATGGNSTHNITSES. The region spanning 1-107 is the MSP domain; it reads MINVDPPTGN…GEIIVKLIAA (107 aa). Over residues 15–25 the composition is skewed to polar residues; sequence GGNSTHNITSE.

As to expression, expressed at higher level in testis.

This chain is Sperm-specific class P protein 34 (ssp-34), found in Caenorhabditis elegans.